The chain runs to 286 residues: Release factor glutamine methyltransferase (286 aa).

Aspartate 148 and asparagine 194 together coordinate S-adenosyl-L-methionine. 194–197 (NPPY) is a binding site for substrate.

This sequence belongs to the protein N5-glutamine methyltransferase family. PrmC subfamily.

It catalyses the reaction L-glutaminyl-[peptide chain release factor] + S-adenosyl-L-methionine = N(5)-methyl-L-glutaminyl-[peptide chain release factor] + S-adenosyl-L-homocysteine + H(+). Functionally, methylates the class 1 translation termination release factors RF1/PrfA and RF2/PrfB on the glutamine residue of the universally conserved GGQ motif. In Leptospira interrogans serogroup Icterohaemorrhagiae serovar Lai (strain 56601), this protein is Release factor glutamine methyltransferase.